The primary structure comprises 204 residues: Ribonuclease HII (204 aa).

The region spanning 1–197 (MTLGIDEAGR…KNRILNPKLL (197 aa)) is the RNase H type-2 domain. Asp-6, Glu-7, and Asp-103 together coordinate a divalent metal cation.

Belongs to the RNase HII family. Mn(2+) is required as a cofactor. The cofactor is Mg(2+).

It localises to the cytoplasm. The catalysed reaction is Endonucleolytic cleavage to 5'-phosphomonoester.. Functionally, endonuclease that specifically degrades the RNA of RNA-DNA hybrids. The sequence is that of Ribonuclease HII from Helicobacter pylori (strain HPAG1).